A 285-amino-acid chain; its full sequence is uncharacterized protein (285 aa).

The 179-residue stretch at 107 to 285 folds into the ATP-grasp domain; the sequence is FLTVDTTIFD…KHHLKRQMIP (179 aa).

This is an uncharacterized protein from Mycoplasma pneumoniae (strain ATCC 29342 / M129 / Subtype 1) (Mycoplasmoides pneumoniae).